Here is a 302-residue protein sequence, read N- to C-terminus: Large ribosomal subunit protein bL28m (302 aa).

It belongs to the bacterial ribosomal protein bL28 family. As to quaternary structure, component of the mitochondrial ribosome large subunit (39S) which comprises a 16S rRNA and about 50 distinct proteins.

It localises to the mitochondrion. The chain is Large ribosomal subunit protein bL28m (mRpL28) from Drosophila melanogaster (Fruit fly).